Reading from the N-terminus, the 611-residue chain is Muscarinic acetylcholine receptor gar-3 (611 aa).

At 1–67 (MQSSSLGNAD…LLGEEGRMVM (67 aa)) the chain is on the extracellular side. Residues asparagine 28 and asparagine 33 are each glycosylated (N-linked (GlcNAc...) asparagine). The chain crosses the membrane as a helical span at residues 68–88 (IVVIGAMFALVTSLGNLMVMV). Topologically, residues 89–101 (SFKIDKQLQTISN) are cytoplasmic. Residues 102-122 (YFLFSLAVADIAIGVISIPMF) traverse the membrane as a helical segment. Residues 123 to 140 (TYYTAIQKWDLGYTMCQF) are Extracellular-facing. Cysteine 138 and cysteine 218 are joined by a disulfide. A helical membrane pass occupies residues 141 to 161 (WLCIDYLMSNASVLNLLLISF). The Cytoplasmic portion of the chain corresponds to 162-181 (DRYFSVTRPLSYRPRRTTKK). The helical transmembrane segment at 182–202 (ALTMIACTYIISLILWPPWII) threads the bilayer. Over 203-227 (SWPYIEGKFTAEPGTCVVQFLQTNP) the chain is Extracellular. The chain crosses the membrane as a helical span at residues 228 to 248 (YVTVGTAVAAFYLPVTIMCIL). Topologically, residues 249 to 525 (YTRVYWETQK…RKQESKAAKT (277 aa)) are cytoplasmic. Disordered regions lie at residues 299 to 364 (RRSM…SSEA), 377 to 432 (SHFA…NNNS), 446 to 477 (SRPS…NSEI), and 500 to 519 (FSSQ…RKQE). Residues 307-317 (SSTSIIKSSGS) show a composition bias toward low complexity. A compositionally biased stretch (basic and acidic residues) spans 503-519 (QERKSEKEQRKNERKQE). A helical membrane pass occupies residues 526–546 (LSAILCAFIATWTPYNLIVCW). Residues 547–557 (EAFFPNTVPNV) lie on the Extracellular side of the membrane. The chain crosses the membrane as a helical span at residues 558–578 (LWTFSYFLCYINSTINPLCYA). At 579–611 (LCNARFRHTYMRILRCKFKAERPTMNQGYVRRN) the chain is on the cytoplasmic side.

This sequence belongs to the G-protein coupled receptor 1 family. Muscarinic acetylcholine receptor subfamily.

The protein resides in the cell membrane. In terms of biological role, the muscarinic acetylcholine receptor mediates various cellular responses, including inhibition of adenylate cyclase, breakdown of phosphoinositides and modulation of potassium channels through the action of G proteins. Primary transducing effect is Pi turnover. Enhances the release of the neurotransmitter acetlycholine in cholinergic motor neurons, which in turn positively feeds back to depolarize body wall muscles and allows for the maintenance of normal body posture and locomotion. This chain is Muscarinic acetylcholine receptor gar-3 (gar-3), found in Caenorhabditis elegans.